The chain runs to 98 residues: MEIEVVDVSRNEIRVLIRGETHTLLSPLVEELNSLDEVEFAGYDVPHPLKEESVLFLRVKEGMNPREVLKGAIRRLMEKYEIIGNSFIEELSSLKVNH.

Belongs to the archaeal Rpo11/eukaryotic RPB11/RPC19 RNA polymerase subunit family. In terms of assembly, part of the RNA polymerase complex.

It is found in the cytoplasm. It carries out the reaction RNA(n) + a ribonucleoside 5'-triphosphate = RNA(n+1) + diphosphate. DNA-dependent RNA polymerase (RNAP) catalyzes the transcription of DNA into RNA using the four ribonucleoside triphosphates as substrates. The chain is DNA-directed RNA polymerase subunit Rpo11 from Korarchaeum cryptofilum (strain OPF8).